Reading from the N-terminus, the 213-residue chain is Nucleolar protein 12 (213 aa).

Residues 32-95 adopt a coiled-coil conformation; it reads GFHKRKVERK…RLVTAKTESV (64 aa). A disordered region spans residues 117–213; sequence ARLLGLPTPE…LTGKARHSGE (97 aa). 2 stretches are compositionally biased toward basic residues: residues 169–181 and 197–213; these read AHSR…KRLR and SKTR…HSGE.

The protein belongs to the RRP17 family. In terms of assembly, interacts with KIAA1191.

The protein resides in the nucleus. It localises to the nucleolus. The protein localises to the cytoplasm. Multifunctional RNA binding protein that plays a role in RNA metabolism and DNA maintenance. Participates in the resolution of DNA stress and the maintenance of genome integrity by localizing to sites of DNA insults. Also plays a role in proper nucleolar organization by limiting nucleolar size and regulating nucleolar number. Mechanistically, regulates the nucleolar levels of fibrillarin and nucleolin, two key players in pre-rRNA processing and ribosome assembly. This Bos taurus (Bovine) protein is Nucleolar protein 12 (NOL12).